The following is a 437-amino-acid chain: Mannan endo-1,4-beta-mannosidase A (437 aa).

An N-terminal signal peptide occupies residues 1–19 (MMMLSKSLLSAATAASALA). The propeptide occupies 20–27 (AVLQPVPR). Residues 28 to 376 (ASSFVTISGT…VDAINGGTTT (349 aa)) are catalytic. An intrachain disulfide couples Cys-53 to Cys-56. N-linked (GlcNAc...) asparagine glycans are attached at residues Asn-157 and Asn-184. Catalysis depends on Glu-196, which acts as the Proton donor/acceptor. 196 to 198 (EPR) contacts substrate. Cysteines 199 and 202 form a disulfide. The substrate site is built by Glu-232 and Trp-274. The N-linked (GlcNAc...) asparagine glycan is linked to Asn-277. A disulfide bond links Cys-292 and Cys-299. The active-site Nucleophile is Glu-303. Residues Cys-311 and Cys-361 are joined by a disulfide bond. Asn-355 carries N-linked (GlcNAc...) asparagine glycosylation. The tract at residues 372–399 (GGTTTPPPVSSTTTTSSRTSSTPPPPGG) is disordered. The linker stretch occupies residues 377 to 399 (PPPVSSTTTTSSRTSSTPPPPGG). The span at 381-392 (SSTTTTSSRTSS) shows a compositional bias: low complexity. Positions 400 to 435 (SCSPLYGQCGGSGYTGPTCCAQGTCIYSNYWYSQCL) constitute a CBM1 domain.

Belongs to the glycosyl hydrolase 5 (cellulase A) family. As to quaternary structure, monomer.

It localises to the secreted. It catalyses the reaction Random hydrolysis of (1-&gt;4)-beta-D-mannosidic linkages in mannans, galactomannans and glucomannans.. Endo-1,4-mannanase that catalyzes the random hydrolysis of (1-&gt;4)-beta-D-mannosidic linkages in mannans and heteromannans. It is a crucial enzyme for depolymerization of seed galactomannans and wood galactoglucomannans. Active against locust bean gum and ivory nut mannan, releasing mainly tri- and disaccharides. Also has transglycosylation activity. Transglycosylation of two mannotrioses into a mannohexaose is the major transglycosylation route. The sequence is that of Mannan endo-1,4-beta-mannosidase A from Hypocrea jecorina (strain ATCC 56765 / BCRC 32924 / NRRL 11460 / Rut C-30) (Trichoderma reesei).